Consider the following 222-residue polypeptide: Cytidylate kinase (222 aa).

Gly-7–Thr-15 serves as a coordination point for ATP.

Belongs to the cytidylate kinase family. Type 1 subfamily.

The protein resides in the cytoplasm. The enzyme catalyses CMP + ATP = CDP + ADP. It catalyses the reaction dCMP + ATP = dCDP + ADP. In Aquifex aeolicus (strain VF5), this protein is Cytidylate kinase.